Here is a 421-residue protein sequence, read N- to C-terminus: MPSSVPWCLLLLAGLCCLVPSSLAEDLQGCAVQETHATAHDEEHLQEPAEHKIAPNLADFAFSLYRHVAHQSNTTNIFFSPVSIATAFALLSLGAKGDTHTQILEGLSFNLTELAEAQIHDGFQHLLNALNHSDNQLQLTTGNGLFIDESAKLLDKFLEDVKKLYHSEAFSINFRDTEEAKKQINDYVEKGTQGKIVDLVKDLDKDTVLALVNYIFFKGTWEKPFEPEYTTEQDFHVDEKTTVRVPMMHRLSSFDVQYSDTLSSWVLLLDYAGNATAFFILPDQGKLQHLEDTLTKGILARFLGNRHSSFVNVHLPKLSISGTYDLTSILPELGITKVFSRQADLSGITEEVPLTVSKALHKAVLTIDEKGTEAAGTTMWEIMPISLPPDLKFNRPFVLIIYDRNTKSPLFVGKVVDPTQK.

The first 24 residues, M1–A24, serve as a signal peptide directing secretion. N73, N110, and N274 each carry an N-linked (GlcNAc...) asparagine glycan. The tract at residues G376–R395 is RCL.

Belongs to the serpin family. Post-translationally, N-glycosylated with carbohydrates having biantennary side chains. In terms of tissue distribution, plasma.

Its subcellular location is the secreted. Functionally, inhibitor of serine proteases. This chain is Alpha-1-antiproteinase 2, found in Equus caballus (Horse).